Here is a 227-residue protein sequence, read N- to C-terminus: Sperm-associated antigen 7 (227 aa).

The interval 1–45 (MADLLGSILSSMEKPPSLGDQESRRKAREQAARLKKLQEQDKQQK) is disordered. The residue at position 2 (Ala2) is an N-acetylalanine. A compositionally biased stretch (basic and acidic residues) spans 21–45 (QESRRKAREQAARLKKLQEQDKQQK). Residues 35-51 (KKLQEQDKQQKVEFRKR) carry the Nuclear localization signal motif. Residues 46 to 109 (VEFRKRMEKE…DCRYVMIFKK (64 aa)) form the R3H domain. Ser114 is modified (phosphoserine). The tract at residues 118-161 (LDSYRHGEEWDPQKAEEKRKLKELAQKQEEEAAQQGPAVVSPAS) is disordered. Residues 119–147 (DSYRHGEEWDPQKAEEKRKLKELAQKQEE) show a composition bias toward basic and acidic residues. A Nuclear localization signal motif is present at residues 122 to 139 (RHGEEWDPQKAEEKRKLK). Residues Ser158 and Ser202 each carry the phosphoserine modification.

It is found in the nucleus. This is Sperm-associated antigen 7 (Spag7) from Mus musculus (Mouse).